A 427-amino-acid chain; its full sequence is Glutamate-1-semialdehyde 2,1-aminomutase (427 aa).

Lys-265 bears the N6-(pyridoxal phosphate)lysine mark.

Belongs to the class-III pyridoxal-phosphate-dependent aminotransferase family. HemL subfamily. In terms of assembly, homodimer. Pyridoxal 5'-phosphate is required as a cofactor.

It is found in the cytoplasm. The catalysed reaction is (S)-4-amino-5-oxopentanoate = 5-aminolevulinate. Its pathway is porphyrin-containing compound metabolism; protoporphyrin-IX biosynthesis; 5-aminolevulinate from L-glutamyl-tRNA(Glu): step 2/2. This Burkholderia vietnamiensis (strain G4 / LMG 22486) (Burkholderia cepacia (strain R1808)) protein is Glutamate-1-semialdehyde 2,1-aminomutase.